Here is a 220-residue protein sequence, read N- to C-terminus: Octanoyltransferase (220 aa).

Residues 36–212 form the BPL/LPL catalytic domain; sequence ADSPDQFWLV…CLARQLGRRL (177 aa). Substrate-binding positions include 75 to 82, 142 to 144, and 155 to 157; these read RGGQVTYH, SLG, and GVA. The Acyl-thioester intermediate role is filled by Cys173.

The protein belongs to the LipB family.

Its subcellular location is the cytoplasm. It carries out the reaction octanoyl-[ACP] + L-lysyl-[protein] = N(6)-octanoyl-L-lysyl-[protein] + holo-[ACP] + H(+). It functions in the pathway protein modification; protein lipoylation via endogenous pathway; protein N(6)-(lipoyl)lysine from octanoyl-[acyl-carrier-protein]: step 1/2. Catalyzes the transfer of endogenously produced octanoic acid from octanoyl-acyl-carrier-protein onto the lipoyl domains of lipoate-dependent enzymes. Lipoyl-ACP can also act as a substrate although octanoyl-ACP is likely to be the physiological substrate. This is Octanoyltransferase from Chromohalobacter salexigens (strain ATCC BAA-138 / DSM 3043 / CIP 106854 / NCIMB 13768 / 1H11).